Here is a 263-residue protein sequence, read N- to C-terminus: MVQTVYKNSDQTVFEDAKALFQLNKNILLKGPTGSGKTKLAETLSNVMKLPMHQVNCSVDLDTESLLGFKTIHTNEEGHQEIVFIDGPVIKAMKEGHILYIDEINMAKPETLPILNGVLDYRRQLTNPYTGEVIKAAPGFNVIAAINEGYVGTLPMNEALKNRFIVIEVDYIDGDILKTVIKEQSKLQDEQLIQHIVKFNEDLRTMTKQGQISEEAASIRALIDLSDLATVMPIERAVQRTIIDKLEDEREQQAILNAIELNF.

Glycine 31–threonine 38 contributes to the ATP binding site.

Belongs to the CbbQ/NirQ/NorQ/GpvN family.

This is an uncharacterized protein from Staphylococcus epidermidis (strain ATCC 12228 / FDA PCI 1200).